The chain runs to 293 residues: 1D-myo-inositol 2-acetamido-2-deoxy-alpha-D-glucopyranoside deacetylase (293 aa).

Residues His16, Asp19, and His156 each contribute to the Zn(2+) site.

The protein belongs to the MshB deacetylase family. Requires Zn(2+) as cofactor.

It catalyses the reaction 1D-myo-inositol 2-acetamido-2-deoxy-alpha-D-glucopyranoside + H2O = 1D-myo-inositol 2-amino-2-deoxy-alpha-D-glucopyranoside + acetate. In terms of biological role, catalyzes the deacetylation of 1D-myo-inositol 2-acetamido-2-deoxy-alpha-D-glucopyranoside (GlcNAc-Ins) in the mycothiol biosynthesis pathway. The chain is 1D-myo-inositol 2-acetamido-2-deoxy-alpha-D-glucopyranoside deacetylase from Nakamurella multipartita (strain ATCC 700099 / DSM 44233 / CIP 104796 / JCM 9543 / NBRC 105858 / Y-104) (Microsphaera multipartita).